The chain runs to 100 residues: Testis development-related protein 1 (100 aa).

The disordered stretch occupies residues 73 to 100 (GLGSLGGQDSSGSLVQRASCELESPYEL).

In terms of tissue distribution, expressed in the testis but not in any other non-reproductive tissues (at protein level). Mainly located in spermatogenic cells in seminiferous tubules of adult testis.

It is found in the cytoplasm. The protein is Testis development-related protein 1 (TDRG1) of Homo sapiens (Human).